A 327-amino-acid chain; its full sequence is F-box/LRR-repeat protein At3g58900 (327 aa).

Residues 1–47 (MDLFSSLPNELLYHILSFLSTKEAALTSVLSKRWRNLFAFVPYLEFD) enclose the F-box domain. LRR repeat units follow at residues 116–144 (DLFI…RVGS), 161–192 (KTLV…DMTN), 199–230 (NVTV…SFDA), 235–261 (YFYY…QINL), and 277–308 (EMLV…YLSP).

The polypeptide is F-box/LRR-repeat protein At3g58900 (Arabidopsis thaliana (Mouse-ear cress)).